Consider the following 416-residue polypeptide: Serine hydroxymethyltransferase (416 aa).

Residues Leu-121 and 125–127 (GHL) each bind (6S)-5,6,7,8-tetrahydrofolate. Lys-230 is subject to N6-(pyridoxal phosphate)lysine. Residue 354-356 (SPF) participates in (6S)-5,6,7,8-tetrahydrofolate binding.

This sequence belongs to the SHMT family. As to quaternary structure, homodimer. The cofactor is pyridoxal 5'-phosphate.

Its subcellular location is the cytoplasm. The catalysed reaction is (6R)-5,10-methylene-5,6,7,8-tetrahydrofolate + glycine + H2O = (6S)-5,6,7,8-tetrahydrofolate + L-serine. Its pathway is one-carbon metabolism; tetrahydrofolate interconversion. It functions in the pathway amino-acid biosynthesis; glycine biosynthesis; glycine from L-serine: step 1/1. In terms of biological role, catalyzes the reversible interconversion of serine and glycine with tetrahydrofolate (THF) serving as the one-carbon carrier. This reaction serves as the major source of one-carbon groups required for the biosynthesis of purines, thymidylate, methionine, and other important biomolecules. Also exhibits THF-independent aldolase activity toward beta-hydroxyamino acids, producing glycine and aldehydes, via a retro-aldol mechanism. The protein is Serine hydroxymethyltransferase of Prochlorococcus marinus (strain MIT 9211).